The sequence spans 143 residues: Large ribosomal subunit protein uL11 (143 aa).

It belongs to the universal ribosomal protein uL11 family. Part of the ribosomal stalk of the 50S ribosomal subunit. Interacts with L10 and the large rRNA to form the base of the stalk. L10 forms an elongated spine to which L12 dimers bind in a sequential fashion forming a multimeric L10(L12)X complex. Post-translationally, one or more lysine residues are methylated.

Its function is as follows. Forms part of the ribosomal stalk which helps the ribosome interact with GTP-bound translation factors. The polypeptide is Large ribosomal subunit protein uL11 (Paracidovorax citrulli (strain AAC00-1) (Acidovorax citrulli)).